Consider the following 379-residue polypeptide: Putative cysteine desulfurase IscS 1 (379 aa).

Residues 71–72 (GT), N151, Q179, and 199–201 (SGH) contribute to the pyridoxal 5'-phosphate site. Residue K202 is modified to N6-(pyridoxal phosphate)lysine. Pyridoxal 5'-phosphate is bound at residue T237. The active-site Cysteine persulfide intermediate is the C325. Residue C325 coordinates [2Fe-2S] cluster.

This sequence belongs to the class-V pyridoxal-phosphate-dependent aminotransferase family. NifS/IscS subfamily. Pyridoxal 5'-phosphate serves as cofactor.

The catalysed reaction is (sulfur carrier)-H + L-cysteine = (sulfur carrier)-SH + L-alanine. Catalyzes the removal of elemental sulfur from cysteine to produce alanine. This is Putative cysteine desulfurase IscS 1 (iscS1) from Bacillus subtilis (strain 168).